Here is a 1235-residue protein sequence, read N- to C-terminus: N-acetylglucosamine-1-phosphotransferase subunits alpha/beta (1235 aa).

A helical transmembrane segment spans residues 22–42 (VCFVGVVVTIVSAFQFGEVVL). Asparagine 83, asparagine 114, asparagine 148, and asparagine 179 each carry an N-linked (GlcNAc...) asparagine glycan. 4 cysteine pairs are disulfide-bonded: cysteine 438-cysteine 461, cysteine 452-cysteine 468, cysteine 505-cysteine 528, and cysteine 519-cysteine 535. LNR repeat units follow at residues 438-473 (CAEG…GNTA) and 505-545 (CNQG…ELYK). Ca(2+)-binding residues include aspartate 449, aspartate 464, aspartate 467, aspartate 516, aspartate 531, and aspartate 534. 2 N-linked (GlcNAc...) asparagine glycosylation sites follow: asparagine 614 and asparagine 729. One can recognise a DMAP1-binding domain in the interval 699–823 (NISLLPKEAQ…AQPTLGVTVS (125 aa)). 2 disordered regions span residues 751-783 (QART…HRSE) and 830-850 (LIVP…AEGN). The segment covering 837–848 (HLPKEEESDRAE) has biased composition (basic and acidic residues). The EF-hand domain maps to 984 to 1019 (VQPLNISQVFHEVDTDQSGVLSDREIRTLATRIHDL). An N-linked (GlcNAc...) asparagine glycan is attached at asparagine 988. Ca(2+) is bound by residues aspartate 997, aspartate 999, serine 1001, and glutamate 1008. Residue asparagine 1108 is glycosylated (N-linked (GlcNAc...) asparagine). Residues 1194–1214 (VLATLIIFTIFSFFAEQIIAL) form a helical membrane-spanning segment.

Belongs to the stealth family. In terms of assembly, hexamer of two alpha, two beta and two gamma (GNPTG) subunits; disulfide-linked. The alpha and/or the beta subunits of the enzyme constitute the catalytic subunits. Interacts with LYSET; facilitates proper localization of GNPTAB. The alpha- and beta-subunits are generated by a proteolytic cleavage by MBTPS1 protease at the Lys-907-Asp-908 bond.

The protein localises to the golgi apparatus membrane. The catalysed reaction is N(4)-[alpha-D-mannosyl-(1-&gt;2)-alpha-D-mannosyl-(glycan)]-L-asparaginyl-[protein] + UDP-N-acetyl-alpha-D-glucosamine = N(4)-[6-(N-acetyl-alpha-D-glucosaminyl-1-phospho)-alpha-D-mannosyl-(1-&gt;2)-alpha-D-mannosyl-(glycan)]-L-asparaginyl-[protein] + UMP + H(+). Its function is as follows. Catalyzes the formation of mannose 6-phosphate (M6P) markers on high mannose type oligosaccharides in the Golgi apparatus. M6P residues are required to bind to the M6P receptors (MPR), which mediate the vesicular transport of lysosomal enzymes to the endosomal/prelysosomal compartment. This chain is N-acetylglucosamine-1-phosphotransferase subunits alpha/beta (Gnptab), found in Mus musculus (Mouse).